The chain runs to 527 residues: Benzoate--CoA ligase (527 aa).

The protein belongs to the ATP-dependent AMP-binding enzyme family. Benzoate-CoA ligase subfamily. As to quaternary structure, monomer.

It catalyses the reaction benzoate + ATP + CoA = benzoyl-CoA + AMP + diphosphate. Catalyzes the ligation of benzoate and CoA to form benzoyl-CoA at the expense of ATP. The enzyme also ligates 2-aminobenzoate and CoA. The enzyme shows activity toward a number of benzoate derivatives. The protein is Benzoate--CoA ligase (bclA) of Thauera aromatica.